Reading from the N-terminus, the 600-residue chain is MATELIENKLKLLPEKPGCYLMKDINGTVIYVGKSKNLKNRVRSYFKSKQVGRRAELVREIRDYDIITVSTDKEAFLLEITLIKKYQPYYNVQLKQGTGYPYIEITREHDPQTRLTSVVHKDGGYYFGPYPNVYAAQATLKFIRKVYPLRRCHGYQGRPCLYYHMGQCLGACFKKVPQKEYDEQIKKIKSFLNGDITSVKQDLTTKMEKASENLEFERAAEIRDQLKYIEETVEKQKIISNDNTQRDIFNYYVDKSWISIQIFFLRQAKLLRRETRMFPLTDAADPEDAFTSFIVQFYGQKNRILPKEILIPSGFDDDTLAEVLNVAVRTPQRGQKKSLLDMAKDNAKLKLDDKFRLLELGNRKTKGAQKEIFDALGLPYGHVIESFDHSHIQGADPVSALVVFKDGEPDKTSYRKYKLKGEVEHQNGGDEVRNTREVVRRRYGRLLREHKKMPDLILMDGGQIQVDACEDVLRNELNLNIPVAGMVKDDKHRTNHLLFGDPINGIPLKLIPLDPKSEGFYLMTRIQDEVHRFAITFHRRRHAKNALSSRLDSIKGIGPKSRNKLLRNFGSLKKIKEASIEDLRAAGLTLPQAQTVKLML.

Residues 15 to 92 (EKPGCYLMKD…IKKYQPYYNV (78 aa)) form the GIY-YIG domain. In terms of domain architecture, UVR spans 197–232 (TSVKQDLTTKMEKASENLEFERAAEIRDQLKYIEET).

This sequence belongs to the UvrC family. Interacts with UvrB in an incision complex.

It localises to the cytoplasm. Its function is as follows. The UvrABC repair system catalyzes the recognition and processing of DNA lesions. UvrC both incises the 5' and 3' sides of the lesion. The N-terminal half is responsible for the 3' incision and the C-terminal half is responsible for the 5' incision. The chain is UvrABC system protein C from Lactobacillus acidophilus (strain ATCC 700396 / NCK56 / N2 / NCFM).